The sequence spans 188 residues: UPF0200 protein M1627_1244 (188 aa).

15–22 (GMPGSGKS) contacts ATP.

Belongs to the UPF0200 family.

The protein is UPF0200 protein M1627_1244 of Saccharolobus islandicus (strain M.16.27) (Sulfolobus islandicus).